Here is a 483-residue protein sequence, read N- to C-terminus: Aspartyl/glutamyl-tRNA(Asn/Gln) amidotransferase subunit B (483 aa).

This sequence belongs to the GatB/GatE family. GatB subfamily. Heterotrimer of A, B and C subunits.

The enzyme catalyses L-glutamyl-tRNA(Gln) + L-glutamine + ATP + H2O = L-glutaminyl-tRNA(Gln) + L-glutamate + ADP + phosphate + H(+). The catalysed reaction is L-aspartyl-tRNA(Asn) + L-glutamine + ATP + H2O = L-asparaginyl-tRNA(Asn) + L-glutamate + ADP + phosphate + 2 H(+). In terms of biological role, allows the formation of correctly charged Asn-tRNA(Asn) or Gln-tRNA(Gln) through the transamidation of misacylated Asp-tRNA(Asn) or Glu-tRNA(Gln) in organisms which lack either or both of asparaginyl-tRNA or glutaminyl-tRNA synthetases. The reaction takes place in the presence of glutamine and ATP through an activated phospho-Asp-tRNA(Asn) or phospho-Glu-tRNA(Gln). The sequence is that of Aspartyl/glutamyl-tRNA(Asn/Gln) amidotransferase subunit B from Rickettsia rickettsii (strain Sheila Smith).